The following is an 806-amino-acid chain: MVDSSTVLIFLLVLGGGQSELDTKITSSGEAAEWEDPDLSLQGSCQPVPSCQKCILSHPSCAWCKQLNFTASGEAEARRCARREELLARGCPAQELEEPRGRQEVLQDKPLSQGDRGEGATQLAPQRIRVTLRPGEPQKFRVRFLRAAGYPVDLYYLMDLSYSMKDDLERVRQLGHALLVRLQEVTHSVRIGFGSFVDKTVLPFVSTVPSKLHHPCPSRLERCQPPFSFHHVLSLTGDAQAFEREVGRQNVSGNLDSPEGGFDAILQAALCQEQIGWRNVSRLLVFTSDDTFHTAGDGKLGGIFMPSDGRCHLDSNGVYTNSAEFDYPSVGQVAQALTAANIQPIFAVTGATLPVYQELRQLIPKSAVGELSEDSSNVVQLIMDAYDSLSSTVTLEHSPLPPGVSISFESHCKGPEKTEGEAGDRGQCNDVRVNQTVDFWVTLQATHCLPEAHVLRLWALGFSEELTVELHTVCDCNCGDAQPHAPYCSDGQGDLQCGICSCAPGRLGQLCECSEADLSSPDLESGCRAPNGTGPLCSGKGRCQCGRCSCSGQSSGRLCECDDASCERHEGILCGGFGHCQCGVCHCHANHTGRACECSKSVDSCVSPEGGLCSGHGYCKCNRCQCLDGYYGALCDQCLGCKSPCEQYRDCAECGAFGTGPLAANCSVVCADVNVTLTLAPNLDDGWCKERTIDNQLFFFLVEHAASGIVLRVRPQEKGVDHTRAIILGCTGGIVAVGLGLVLAYRLSVEIYDRREYRRFEKEQQQLNWKQDNNPLYKSAITTTVNPRFQGTNGRSPSLSLTREAD.

The N-terminal stretch at 1–19 is a signal peptide; it reads MVDSSTVLIFLLVLGGGQS. The Extracellular segment spans residues 20 to 724; the sequence is ELDTKITSSG…PQEKGVDHTR (705 aa). The PSI domain maps to 44-92; sequence SCQPVPSCQKCILSHPSCAWCKQLNFTASGEAEARRCARREELLARGCP. 26 disulfide bridges follow: Cys-51-Cys-476, Cys-54-Cys-80, Cys-64-Cys-91, Cys-216-Cys-223, Cys-271-Cys-311, Cys-412-Cys-428, Cys-448-Cys-474, Cys-478-Cys-497, Cys-488-Cys-500, Cys-502-Cys-511, Cys-513-Cys-545, Cys-527-Cys-543, Cys-537-Cys-548, Cys-550-Cys-559, Cys-561-Cys-582, Cys-566-Cys-580, Cys-574-Cys-585, Cys-587-Cys-596, Cys-598-Cys-621, Cys-605-Cys-619, Cys-613-Cys-624, Cys-626-Cys-635, Cys-638-Cys-641, Cys-645-Cys-688, Cys-651-Cys-670, and Cys-654-Cys-666. Asn-68 is a glycosylation site (N-linked (GlcNAc...) asparagine). Basic and acidic residues predominate over residues 98 to 107; the sequence is EPRGRQEVLQ. A disordered region spans residues 98-123; that stretch reads EPRGRQEVLQDKPLSQGDRGEGATQL. The 240-residue stretch at 150–389 folds into the VWFA domain; that stretch reads YPVDLYYLMD…QLIMDAYDSL (240 aa). The Mg(2+) site is built by Ser-161 and Ser-163. The Ca(2+) site is built by Ser-163, Asp-166, Asp-167, and Asp-198. Asn-250 is a glycosylation site (N-linked (GlcNAc...) asparagine). Positions 254, 256, 258, and 259 each coordinate Ca(2+). Residue Glu-259 coordinates Mg(2+). A glycan (N-linked (GlcNAc...) asparagine) is linked at Asn-279. 2 residues coordinate Ca(2+): Asp-289 and Glu-373. The N-linked (GlcNAc...) asparagine glycan is linked to Asn-434. I-EGF domains lie at 478–512, 513–560, 561–597, and 598–636; these read CGDA…QLCE, CSEA…RLCE, CDDA…RACE, and CSKS…ALCD. Asn-531 is a glycosylation site (N-linked (GlcNAc...) asparagine). N-linked (GlcNAc...) asparagine glycosylation is present at Asn-590. 2 N-linked (GlcNAc...) asparagine glycosylation sites follow: Asn-665 and Asn-674. Residues 725-745 form a helical membrane-spanning segment; sequence AIILGCTGGIVAVGLGLVLAY. Residues 746 to 806 are Cytoplasmic-facing; it reads RLSVEIYDRR…PSLSLTREAD (61 aa). A disordered region spans residues 786–806; that stretch reads NPRFQGTNGRSPSLSLTREAD.

Belongs to the integrin beta chain family. Heterodimer of an alpha and a beta subunit. ITGB7/beta-7 associates with either ITGA4/alpha-4 or ITGAE/alpha-E. Integrin ITGA4/ITGB7 interacts with MADCAM1. Integrin ITGA4/ITGB7 interacts with VCAM1 and fibronectin. Interacts with FLNA (via filamin repeats 4, 9, 12, 17, 19, 21, and 23).

The protein resides in the cell membrane. Integrin ITGA4/ITGB7 (alpha-4/beta-7) (Peyer patches-specific homing receptor LPAM-1) is an adhesion molecule that mediates lymphocyte migration and homing to gut-associated lymphoid tissue (GALT). Integrin ITGA4/ITGB7 interacts with the cell surface adhesion molecules MADCAM1 which is normally expressed by the vascular endothelium of the gastrointestinal tract. Also interacts with VCAM1 and fibronectin, an extracellular matrix component. It recognizes one or more domains within the alternatively spliced CS-1 region of fibronectin. Interactions involve the tripeptide L-D-T in MADCAM1, and L-D-V in fibronectin. Integrin ITGAE/ITGB7 (alpha-E/beta-7, HML-1) is a receptor for E-cadherin. The polypeptide is Integrin beta-7 (Itgb7) (Mus musculus (Mouse)).